Reading from the N-terminus, the 347-residue chain is Phosphoribosylformylglycinamidine cyclo-ligase (347 aa).

It belongs to the AIR synthase family.

The protein localises to the cytoplasm. It catalyses the reaction 2-formamido-N(1)-(5-O-phospho-beta-D-ribosyl)acetamidine + ATP = 5-amino-1-(5-phospho-beta-D-ribosyl)imidazole + ADP + phosphate + H(+). It participates in purine metabolism; IMP biosynthesis via de novo pathway; 5-amino-1-(5-phospho-D-ribosyl)imidazole from N(2)-formyl-N(1)-(5-phospho-D-ribosyl)glycinamide: step 2/2. This is Phosphoribosylformylglycinamidine cyclo-ligase from Prochlorococcus marinus (strain MIT 9301).